Here is a 297-residue protein sequence, read N- to C-terminus: HTH-type transcriptional regulator ArgP (297 aa).

In terms of domain architecture, HTH lysR-type spans Pro-4–Thr-60. Residues Phe-21–Lys-40 constitute a DNA-binding region (H-T-H motif).

This sequence belongs to the LysR transcriptional regulatory family. In terms of assembly, homodimer.

Controls the transcription of genes involved in arginine and lysine metabolism. The sequence is that of HTH-type transcriptional regulator ArgP from Enterobacter sp. (strain 638).